Reading from the N-terminus, the 257-residue chain is THAP domain-containing protein 11 (257 aa).

Residues 6–64 (CCVPGCYNNSHRDRDLRFYTFPKDPTQREIWLKNISRAGVSGCFSTFQPTTGHRVCSVH) form a THAP-type zinc finger. Positions 196-251 (ELLRKLNEQRDIIALMEIKMKEMKNTIRQLRVTEARLQDELRQREQERERLICANT) form a coiled coil.

It belongs to the THAP11 family.

The protein localises to the nucleus. It is found in the cytoplasm. In terms of biological role, transcription factor, which has both transcriptional activation and repression activities. Binds numerous promoters of genes and therefore can be involved in many processes. Also modulates chromatin accessibility. Required for normal brain development and neural precursor differentiation. The protein is THAP domain-containing protein 11 (thap11) of Danio rerio (Zebrafish).